Here is a 400-residue protein sequence, read N- to C-terminus: tRNA-specific adenosine deaminase 1 (400 aa).

One can recognise an A to I editase domain in the interval 76 to 400 (SIATGVKALP…WIPTRTDDVK (325 aa)). Histidine 101 contributes to the Zn(2+) binding site. Glutamate 103 serves as the catalytic Proton donor. Arginine 108 is a binding site for 1D-myo-inositol hexakisphosphate. Zn(2+) contacts are provided by cysteine 157 and cysteine 223. 1D-myo-inositol hexakisphosphate contacts are provided by lysine 226, arginine 232, lysine 369, and arginine 375.

This sequence belongs to the ADAT1 family. The cofactor is 1D-myo-inositol hexakisphosphate. Requires Zn(2+) as cofactor.

It carries out the reaction adenosine(37) in tRNA(Ala) + H2O + H(+) = inosine(37) in tRNA(Ala) + NH4(+). Deaminates adenosine-37 to inosine in tRNA-Ala. The sequence is that of tRNA-specific adenosine deaminase 1 (TAD1) from Saccharomyces cerevisiae (strain ATCC 204508 / S288c) (Baker's yeast).